Consider the following 134-residue polypeptide: UPF0102 protein Dshi_2830 (134 aa).

Belongs to the UPF0102 family.

The polypeptide is UPF0102 protein Dshi_2830 (Dinoroseobacter shibae (strain DSM 16493 / NCIMB 14021 / DFL 12)).